Reading from the N-terminus, the 476-residue chain is Phosphomethylpyrimidine synthase (476 aa).

The segment at 1-27 (MSTQLQHARDGTVTDAMRRVADREGRD) is disordered. The segment covering 7-27 (HARDGTVTDAMRRVADREGRD) has biased composition (basic and acidic residues). Substrate contacts are provided by residues asparagine 67, methionine 96, tyrosine 125, histidine 160, 180-182 (SRG), 221-224 (DGLR), and glutamate 260. Histidine 264 serves as a coordination point for Zn(2+). Position 287 (tyrosine 287) interacts with substrate. A Zn(2+)-binding site is contributed by histidine 328. [4Fe-4S] cluster contacts are provided by cysteine 408, cysteine 411, and cysteine 416. The disordered stretch occupies residues 425–476 (RDAGDDADDMTELTTETDLSESAAAEVNRPPTGTHDAPAAEQAPSPGDDDDD). The segment covering 436–447 (ELTTETDLSESA) has biased composition (low complexity).

Belongs to the ThiC family. Requires [4Fe-4S] cluster as cofactor.

The catalysed reaction is 5-amino-1-(5-phospho-beta-D-ribosyl)imidazole + S-adenosyl-L-methionine = 4-amino-2-methyl-5-(phosphooxymethyl)pyrimidine + CO + 5'-deoxyadenosine + formate + L-methionine + 3 H(+). The protein operates within cofactor biosynthesis; thiamine diphosphate biosynthesis. In terms of biological role, catalyzes the synthesis of the hydroxymethylpyrimidine phosphate (HMP-P) moiety of thiamine from aminoimidazole ribotide (AIR) in a radical S-adenosyl-L-methionine (SAM)-dependent reaction. In Halobacterium salinarum (strain ATCC 29341 / DSM 671 / R1), this protein is Phosphomethylpyrimidine synthase.